A 259-amino-acid polypeptide reads, in one-letter code: NAD kinase (259 aa).

Aspartate 49 acts as the Proton acceptor in catalysis. NAD(+) is bound by residues aspartate 49–glycine 50, arginine 54, asparagine 118–glutamate 119, aspartate 148, alanine 156, threonine 159–serine 164, and alanine 183.

The protein belongs to the NAD kinase family. It depends on a divalent metal cation as a cofactor.

It is found in the cytoplasm. The enzyme catalyses NAD(+) + ATP = ADP + NADP(+) + H(+). Its function is as follows. Involved in the regulation of the intracellular balance of NAD and NADP, and is a key enzyme in the biosynthesis of NADP. Catalyzes specifically the phosphorylation on 2'-hydroxyl of the adenosine moiety of NAD to yield NADP. The sequence is that of NAD kinase from Xylella fastidiosa (strain Temecula1 / ATCC 700964).